Here is a 366-residue protein sequence, read N- to C-terminus: MTPTTTPVSNPDALSTGTQDVHTLKGTLQRLAPGTPLRDGLDRIVRGHTGALIVIGDDENVSSICDGGFEFDVSFAATRLRELCKMDGAVILSSDLERIKRANVQLLPSPTWPTQESGTRHRSAERTALHTGVPVIAVSESQNTITLYVEGKSHMLEQPAALLNRANQALGTMERYRDRLDQVNNRLHLAELHSYVTVIDVVSVIQREEMLRRVGEIIDGDVLELGKDAKEIQIQLSELRGDNDRERESIIADYLVTDGIPADEEIHAALEAISHLDDKALLNPANIARVLGLPPTEEALDEPVTPRGYRTLNRIPRVQKFLMDKLIVEFGNLDALLNASVEDLSAVDGVGSLWARHITDGLGRLS.

One can recognise a DAC domain in the interval valine 21–proline 159. ATP contacts are provided by residues glycine 88, leucine 106, and threonine 119–serine 123.

It belongs to the DisA family. In terms of assembly, homooctamer. It depends on Mg(2+) as a cofactor.

The enzyme catalyses 2 ATP = 3',3'-c-di-AMP + 2 diphosphate. Functionally, participates in a DNA-damage check-point. DisA forms globular foci that rapidly scan along the chromosomes searching for lesions. In terms of biological role, also has diadenylate cyclase activity, catalyzing the condensation of 2 ATP molecules into cyclic di-AMP (c-di-AMP). c-di-AMP likely acts as a signaling molecule that may couple DNA integrity with a cellular process. The protein is DNA integrity scanning protein DisA of Corynebacterium glutamicum (strain ATCC 13032 / DSM 20300 / JCM 1318 / BCRC 11384 / CCUG 27702 / LMG 3730 / NBRC 12168 / NCIMB 10025 / NRRL B-2784 / 534).